The chain runs to 55 residues: ATP synthase protein 8 (55 aa).

The helical transmembrane segment at 7-24 (NPWFFIMIISWLTYSMII) threads the bilayer. Positions 34-55 (TNPPARKEPTTNTTTPWNWPWT) are disordered. Residues 43–55 (TTNTTTPWNWPWT) show a composition bias toward low complexity.

The protein belongs to the ATPase protein 8 family. F-type ATPases have 2 components, CF(1) - the catalytic core - and CF(0) - the membrane proton channel.

The protein resides in the mitochondrion membrane. Its function is as follows. Mitochondrial membrane ATP synthase (F(1)F(0) ATP synthase or Complex V) produces ATP from ADP in the presence of a proton gradient across the membrane which is generated by electron transport complexes of the respiratory chain. F-type ATPases consist of two structural domains, F(1) - containing the extramembraneous catalytic core and F(0) - containing the membrane proton channel, linked together by a central stalk and a peripheral stalk. During catalysis, ATP synthesis in the catalytic domain of F(1) is coupled via a rotary mechanism of the central stalk subunits to proton translocation. Part of the complex F(0) domain. Minor subunit located with subunit a in the membrane. The protein is ATP synthase protein 8 (MT-ATP8) of Vireo altiloquus (Black-whiskered vireo).